The following is a 261-amino-acid chain: Zinc finger protein 664 (261 aa).

9 C2H2-type zinc fingers span residues 3 to 25, 31 to 53, 59 to 81, 87 to 109, 115 to 137, 143 to 165, 171 to 193, 199 to 221, and 227 to 249; these read YKCPMCREFFSERADLFMHQKIH, HKCDKCDKGFFHISELHIHWRDH, YKCDDCGKDFSTTTKLNRHKKIH, YKCYECGKAFNWSSHLQIHMRVH, YVCSECGRGFSNSSNLCMHQRVH, FKCEECGKAFRHTSSLCMHQRVH, YKCYECGKAFSQSSSLCIHQRVH, YRCCGCGKAFSQSSSLCIHQRVH, and FKCDECGKAFSQSTSLCIHQRVH. Lysine 257 is covalently cross-linked (Glycyl lysine isopeptide (Lys-Gly) (interchain with G-Cter in SUMO2)).

The protein belongs to the krueppel C2H2-type zinc-finger protein family.

It is found in the nucleus. Functionally, may be involved in transcriptional regulation. The sequence is that of Zinc finger protein 664 (ZNF664) from Pongo abelii (Sumatran orangutan).